A 355-amino-acid chain; its full sequence is MESPIRTARRTLPLLIGATCLVLALTGCAGEDGPAQARPTPSASTSPKQAPALSAAQARDVITRYSKINNEANADLDRRQLDTVEDGPLYAMSVSDYTETEGLPAKDREPYKRWSYDLASAKLYIPRLAAGQERWFAAALSSEKGKAPSRLAVFAELPRHKRWEMVSVVDLDSQKLPDVALDREGYATAVPANDNKHLAADANLLRTAVLDNFATGGTNTGTKVFAPTKASKRQIKVHSDAATRFGDKGTSVFDGADNRFTDAYALKTADGGALILFSHTHTQTDAVAHSGLQINPGKDDRAWLHDVPRTSITYTFICNDAATVPAKSQPSRLIGYTCARTNASGPPLPSWTARA.

Positions 1–27 (MESPIRTARRTLPLLIGATCLVLALTG) are cleaved as a signal peptide. A lipid anchor (N-palmitoyl cysteine) is attached at Cys28. The S-diacylglycerol cysteine moiety is linked to residue Cys28. Residues 33–53 (GPAQARPTPSASTSPKQAPAL) are disordered. A compositionally biased stretch (polar residues) spans 39-48 (PTPSASTSPK).

The protein localises to the cell membrane. This is an uncharacterized protein from Streptomyces coelicolor (strain ATCC BAA-471 / A3(2) / M145).